The primary structure comprises 303 residues: Taste receptor type 2 member 13 (303 aa).

Topologically, residues 1–7 (MESALPS) are extracellular. The chain crosses the membrane as a helical span at residues 8–28 (ILTLVIIAEFIIGNLSNGFIV). Over 29–55 (LINYIDWVSKRELSSVDKLLIILAISR) the chain is Cytoplasmic. The helical transmembrane segment at 56–76 (IGLIWEILVSWFLALHYLAIF) threads the bilayer. Over 77–85 (VSGTGLRIM) the chain is Extracellular. A helical transmembrane segment spans residues 86-106 (IFSWIVSNHFSLWLATILSIF). At 107–128 (YLLKIASFSSPAFLYLKWRVNK) the chain is on the cytoplasmic side. A helical transmembrane segment spans residues 129–149 (VILMILLGSLVFLFLNLIQIN). Residues 150-184 (IHIKDWLDRYEGNTTWNFSMSDFVTFSVSVKFTMT) are Extracellular-facing. N162 and N166 each carry an N-linked (GlcNAc...) asparagine glycan. The chain crosses the membrane as a helical span at residues 185 to 205 (MFSLTPFTVALISFSLLIFSL). Residues 206-232 (QKHLQKMQLNYKGHREPRTKVHTNALK) are Cytoplasmic-facing. A helical transmembrane segment spans residues 233–253 (IVISFLLLYASFFLCILISWI). Over 254–261 (SELYQNTA) the chain is Extracellular. A helical membrane pass occupies residues 262–282 (IYMLCETIGLFYPSSHSFLLI). Residues 283–303 (LGNPKLRQAFLLVAAKVWAKR) lie on the Cytoplasmic side of the membrane.

The protein belongs to the G-protein coupled receptor T2R family.

It localises to the membrane. Its function is as follows. Receptor that may play a role in the perception of bitterness and is gustducin-linked. May play a role in sensing the chemical composition of the gastrointestinal content. The activity of this receptor may stimulate alpha gustducin, mediate PLC-beta-2 activation and lead to the gating of TRPM5. In Pongo pygmaeus (Bornean orangutan), this protein is Taste receptor type 2 member 13 (TAS2R13).